Here is a 104-residue protein sequence, read N- to C-terminus: uncharacterized protein (104 aa).

This sequence belongs to the mimivirus L28/L54 family.

This is an uncharacterized protein from Acanthamoeba polyphaga mimivirus (APMV).